An 89-amino-acid chain; its full sequence is Small ribosomal subunit protein uS15 (89 aa).

The segment covering Met1 to Glu10 has biased composition (basic and acidic residues). The disordered stretch occupies residues Met1 to Gly23. Positions Ala14 to Gly23 are enriched in polar residues.

This sequence belongs to the universal ribosomal protein uS15 family. In terms of assembly, part of the 30S ribosomal subunit. Forms a bridge to the 50S subunit in the 70S ribosome, contacting the 23S rRNA.

Functionally, one of the primary rRNA binding proteins, it binds directly to 16S rRNA where it helps nucleate assembly of the platform of the 30S subunit by binding and bridging several RNA helices of the 16S rRNA. In terms of biological role, forms an intersubunit bridge (bridge B4) with the 23S rRNA of the 50S subunit in the ribosome. This Synechococcus sp. (strain WH7803) protein is Small ribosomal subunit protein uS15.